Consider the following 666-residue polypeptide: L-aspartate N-monooxygenase (nitrosuccinate-forming) (666 aa).

The segment at 645-666 (LPAYEDPGVRCPSDDRLTEVTA) is disordered. Positions 656-666 (PSDDRLTEVTA) are enriched in basic and acidic residues.

This sequence belongs to the nitrosuccinic acid synthase family. FAD serves as cofactor.

The catalysed reaction is L-aspartate + 3 NADPH + 3 O2 + 2 H(+) = 2-nitrobutanedioate + 3 NADP(+) + 4 H2O. The protein operates within antibiotic biosynthesis. Part of a gene cluster involved in the biosynthesis of cremeomycin, a light-sensitive o-diazoquinone with antibacterial and antiproliferative effects. Catalyzes the iterative oxidation of L-aspartic acid to nitrosuccinic acid (2-nitrobutanedioate) via N-hydroxyaspartic acid and nitrososuccinic acid. This chain is L-aspartate N-monooxygenase (nitrosuccinate-forming), found in Streptomyces cremeus.